Reading from the N-terminus, the 245-residue chain is U11/U12 small nuclear ribonucleoprotein 35 kDa protein (245 aa).

One can recognise an RRM domain in the interval 51–129; sequence LTLFVARLNL…HEIFVDYELE (79 aa). Residues 146–162 are compositionally biased toward basic and acidic residues; sequence GKKESGQLRFGGRDRPF. Positions 146-165 are disordered; the sequence is GKKESGQLRFGGRDRPFRKP. K172 participates in a covalent cross-link: Glycyl lysine isopeptide (Lys-Gly) (interchain with G-Cter in SUMO2). The segment at 173 to 222 is disordered; the sequence is NDQFREGKRERRERSRSRERHWDSRMRDHHDRGREKRWQEREPARAWPEG. Composition is skewed to basic and acidic residues over residues 174–185 and 192–216; these read DQFREGKRERRE and RHWD…REPA.

In terms of assembly, component of the U11/U12 snRNPs that are part of the U12-type spliceosome.

The protein localises to the nucleus. The chain is U11/U12 small nuclear ribonucleoprotein 35 kDa protein (SNRNP35) from Bos taurus (Bovine).